A 212-amino-acid chain; its full sequence is Golgi SNAP receptor complex member 2 homolog memb-1 (212 aa).

At 1–189 (MEAQYQSTNF…QVIDRRVRED (189 aa)) the chain is on the cytoplasmic side. Residues 190–210 (WIFVIGCIVCCIFMYAFYRFW) form a helical; Anchor for type IV membrane protein membrane-spanning segment. Residues 211-212 (RG) lie on the Vesicular side of the membrane.

Belongs to the GOSR2 family. In terms of assembly, part of a unique SNARE complex.

The protein localises to the golgi apparatus. Its subcellular location is the cis-Golgi network membrane. The protein resides in the golgi apparatus membrane. It is found in the endoplasmic reticulum membrane. Its function is as follows. Involved in transport of proteins from the cis/medial-Golgi to the trans-Golgi network. The chain is Golgi SNAP receptor complex member 2 homolog memb-1 from Caenorhabditis briggsae.